Here is a 146-residue protein sequence, read N- to C-terminus: U1 small nuclear ribonucleoprotein C (146 aa).

The Matrin-type zinc-finger motif lies at 4–36; it reads YYCDYCDTYLTHDSPSVRKTHCTGRKHRDNVKF. The interval 64 to 96 is disordered; that stretch reads NNPFAGGPSSAPPKPSGVSIPPPNMGAPPRPGM. Residues 73–96 show a composition bias toward pro residues; the sequence is SAPPKPSGVSIPPPNMGAPPRPGM.

Belongs to the U1 small nuclear ribonucleoprotein C family. As to quaternary structure, U1 snRNP is composed of the 7 core Sm proteins B/B', D1, D2, D3, E, F and G that assemble in a heptameric protein ring on the Sm site of the small nuclear RNA to form the core snRNP, and at least 3 U1 snRNP-specific proteins U1-70K, U1-A and U1-C. U1-C interacts with U1 snRNA and the 5' splice-site region of the pre-mRNA.

The protein localises to the nucleus. Functionally, component of the spliceosomal U1 snRNP, which is essential for recognition of the pre-mRNA 5' splice-site and the subsequent assembly of the spliceosome. U1-C is directly involved in initial 5' splice-site recognition for both constitutive and regulated alternative splicing. The interaction with the 5' splice-site seems to precede base-pairing between the pre-mRNA and the U1 snRNA. Stimulates commitment or early (E) complex formation by stabilizing the base pairing of the 5' end of the U1 snRNA and the 5' splice-site region. This Drosophila pseudoobscura pseudoobscura (Fruit fly) protein is U1 small nuclear ribonucleoprotein C.